Consider the following 971-residue polypeptide: Kinesin-like protein KIN-6 (971 aa).

2 disordered regions span residues 1–44 (MEEK…SSLA) and 93–121 (TTTTKSRPRNVWPQNPSKKNNAKENRNPE). The segment covering 29 to 39 (ATPFTTTTKPP) has biased composition (low complexity). The 385-residue stretch at 76–460 (SLKIFLRIKP…LRQASPYMKI (385 aa)) folds into the Kinesin motor domain. 202-209 (GPSGSGKT) is an ATP binding site. Basic and acidic residues predominate over residues 700–709 (RREAGSEESS). Disordered stretches follow at residues 700–856 (RREA…TEEM) and 872–917 (KTTN…RLQP). The span at 768 to 783 (QSVNSEENVGIPSTIT) shows a compositional bias: polar residues. The segment covering 785 to 797 (VEAEVTDFQRDQN) has biased composition (basic and acidic residues). The segment covering 809–827 (EVSQDCINSGLSNVQTKSA) has biased composition (polar residues). Residues 831–842 (RFPDSEKQERNR) show a composition bias toward basic and acidic residues. Basic residues predominate over residues 903 to 915 (KKQKNGQKPKRRL).

This sequence belongs to the TRAFAC class myosin-kinesin ATPase superfamily. Kinesin family. KIN-6 subfamily.

The polypeptide is Kinesin-like protein KIN-6 (Arabidopsis thaliana (Mouse-ear cress)).